We begin with the raw amino-acid sequence, 197 residues long: uncharacterized protein (197 aa).

This is an uncharacterized protein from Bacillus subtilis (strain 168).